Reading from the N-terminus, the 467-residue chain is UDP-N-acetylmuramate--L-alanine ligase (467 aa).

ATP is bound at residue 114-120 (GTHGKTT).

It belongs to the MurCDEF family.

It is found in the cytoplasm. It carries out the reaction UDP-N-acetyl-alpha-D-muramate + L-alanine + ATP = UDP-N-acetyl-alpha-D-muramoyl-L-alanine + ADP + phosphate + H(+). The protein operates within cell wall biogenesis; peptidoglycan biosynthesis. Its function is as follows. Cell wall formation. This chain is UDP-N-acetylmuramate--L-alanine ligase, found in Bradyrhizobium sp. (strain BTAi1 / ATCC BAA-1182).